The primary structure comprises 405 residues: Serpin H1 (405 aa).

Positions M1–A15 are cleaved as a signal peptide. N-linked (GlcNAc...) asparagine glycosylation is found at N107 and N112. A Prevents secretion from ER motif is present at residues R402 to L405.

The protein belongs to the serpin family.

The protein localises to the endoplasmic reticulum lumen. Its function is as follows. Binds specifically to collagen. Could be involved as a chaperone in the biosynthetic pathway of collagen. This is Serpin H1 (SERPINH1) from Gallus gallus (Chicken).